The chain runs to 414 residues: Serine hydroxymethyltransferase (414 aa).

Residues leucine 121 and 125–127 (GHL) each bind (6S)-5,6,7,8-tetrahydrofolate. Residue lysine 229 is modified to N6-(pyridoxal phosphate)lysine.

This sequence belongs to the SHMT family. Homodimer. The cofactor is pyridoxal 5'-phosphate.

It localises to the cytoplasm. The catalysed reaction is (6R)-5,10-methylene-5,6,7,8-tetrahydrofolate + glycine + H2O = (6S)-5,6,7,8-tetrahydrofolate + L-serine. It participates in one-carbon metabolism; tetrahydrofolate interconversion. It functions in the pathway amino-acid biosynthesis; glycine biosynthesis; glycine from L-serine: step 1/1. Its function is as follows. Catalyzes the reversible interconversion of serine and glycine with tetrahydrofolate (THF) serving as the one-carbon carrier. This reaction serves as the major source of one-carbon groups required for the biosynthesis of purines, thymidylate, methionine, and other important biomolecules. Also exhibits THF-independent aldolase activity toward beta-hydroxyamino acids, producing glycine and aldehydes, via a retro-aldol mechanism. The sequence is that of Serine hydroxymethyltransferase from Albidiferax ferrireducens (strain ATCC BAA-621 / DSM 15236 / T118) (Rhodoferax ferrireducens).